Here is an 88-residue protein sequence, read N- to C-terminus: Small ribosomal subunit protein uS17 (88 aa).

The protein belongs to the universal ribosomal protein uS17 family. Part of the 30S ribosomal subunit.

One of the primary rRNA binding proteins, it binds specifically to the 5'-end of 16S ribosomal RNA. This is Small ribosomal subunit protein uS17 from Leuconostoc mesenteroides subsp. mesenteroides (strain ATCC 8293 / DSM 20343 / BCRC 11652 / CCM 1803 / JCM 6124 / NCDO 523 / NBRC 100496 / NCIMB 8023 / NCTC 12954 / NRRL B-1118 / 37Y).